A 181-amino-acid polypeptide reads, in one-letter code: CASP-like protein 1F2 (181 aa).

Residues 1 to 18 (MADIETKSSQNQPLKTQN) lie on the Cytoplasmic side of the membrane. The helical transmembrane segment at 19–39 (IFIGAQIFLRIVVIAASFAST) threads the bilayer. Residues 40–70 (WLMLTNKQTIDIGGFVLDANYSYSPEFKFLS) are Extracellular-facing. Asn59 is a glycosylation site (N-linked (GlcNAc...) asparagine). Residues 71-91 (YANIVVGAFSFVSLLFLVLVG) traverse the membrane as a helical segment. Residues 92–100 (RRSSNPTYY) are Cytoplasmic-facing. Residues 101-121 (FILFLHDLALMSLVLGGCAAA) traverse the membrane as a helical segment. Topologically, residues 122 to 150 (TVIGSLGKYGNSHTGWMQICDHFGKFCKR) are extracellular. A helical membrane pass occupies residues 151 to 171 (ATTSVAFSYFSLVCLLILTIT). The Cytoplasmic portion of the chain corresponds to 172–181 (SASKSRQIQV).

Belongs to the Casparian strip membrane proteins (CASP) family. As to quaternary structure, homodimer and heterodimers.

It is found in the cell membrane. The protein is CASP-like protein 1F2 of Populus trichocarpa (Western balsam poplar).